A 164-amino-acid polypeptide reads, in one-letter code: UPF0304 protein YfbU (164 aa).

It belongs to the UPF0304 family.

This is UPF0304 protein YfbU from Escherichia coli O139:H28 (strain E24377A / ETEC).